The chain runs to 81 residues: Elongation factor 1-beta (81 aa).

Belongs to the EF-1-beta/EF-1-delta family.

Its function is as follows. Promotes the exchange of GDP for GTP in EF-1-alpha/GDP, thus allowing the regeneration of EF-1-alpha/GTP that could then be used to form the ternary complex EF-1-alpha/GTP/AAtRNA. The protein is Elongation factor 1-beta of Nanoarchaeum equitans (strain Kin4-M).